The sequence spans 88 residues: Kunitz-type U15-theraphotoxin-Hs1e (88 aa).

A signal peptide spans 1–27 (MGTARFLSAVLLLSVLLMVTFPALLSA). The propeptide occupies 28 to 33 (EYHDGR). The region spanning 37-85 (CSLPSDSGDRLRFFEMWYFDGTTCTKFVYGGYGGNDNRFPTEKACMKRC) is the BPTI/Kunitz inhibitor domain. 2 disulfides stabilise this stretch: cysteine 37/cysteine 85 and cysteine 60/cysteine 81.

This sequence belongs to the venom Kunitz-type family. 03 (sub-Kunitz) subfamily. In terms of tissue distribution, expressed by the venom gland.

It localises to the secreted. Serine protease inhibitor that inhibits trypsin (Ki=9.61 nM), kallikrein (Ki=24.8 nM), and chymotrypsin. This Cyriopagopus schmidti (Chinese bird spider) protein is Kunitz-type U15-theraphotoxin-Hs1e.